We begin with the raw amino-acid sequence, 432 residues long: Tol-Pal system protein TolB (432 aa).

Residues 1–21 form the signal peptide; the sequence is MSTLIRIALFALALMAGAAQA.

Belongs to the TolB family. The Tol-Pal system is composed of five core proteins: the inner membrane proteins TolA, TolQ and TolR, the periplasmic protein TolB and the outer membrane protein Pal. They form a network linking the inner and outer membranes and the peptidoglycan layer.

It localises to the periplasm. Its function is as follows. Part of the Tol-Pal system, which plays a role in outer membrane invagination during cell division and is important for maintaining outer membrane integrity. The polypeptide is Tol-Pal system protein TolB (Pseudomonas aeruginosa (strain ATCC 15692 / DSM 22644 / CIP 104116 / JCM 14847 / LMG 12228 / 1C / PRS 101 / PAO1)).